Consider the following 179-residue polypeptide: ATP-dependent protease subunit HslV (179 aa).

T7 is an active-site residue. Residues G162, C165, and T168 each contribute to the Na(+) site.

Belongs to the peptidase T1B family. HslV subfamily. In terms of assembly, a double ring-shaped homohexamer of HslV is capped on each side by a ring-shaped HslU homohexamer. The assembly of the HslU/HslV complex is dependent on binding of ATP.

The protein localises to the cytoplasm. It catalyses the reaction ATP-dependent cleavage of peptide bonds with broad specificity.. Its activity is regulated as follows. Allosterically activated by HslU binding. Its function is as follows. Protease subunit of a proteasome-like degradation complex believed to be a general protein degrading machinery. This Bordetella petrii (strain ATCC BAA-461 / DSM 12804 / CCUG 43448) protein is ATP-dependent protease subunit HslV.